The chain runs to 434 residues: ATP-dependent protease ATPase subunit HslU (434 aa).

Residues Ile18, 60–65 (GVGKTE), Asp247, Glu312, and Arg384 contribute to the ATP site.

Belongs to the ClpX chaperone family. HslU subfamily. A double ring-shaped homohexamer of HslV is capped on each side by a ring-shaped HslU homohexamer. The assembly of the HslU/HslV complex is dependent on binding of ATP.

The protein localises to the cytoplasm. Its function is as follows. ATPase subunit of a proteasome-like degradation complex; this subunit has chaperone activity. The binding of ATP and its subsequent hydrolysis by HslU are essential for unfolding of protein substrates subsequently hydrolyzed by HslV. HslU recognizes the N-terminal part of its protein substrates and unfolds these before they are guided to HslV for hydrolysis. In Brucella abortus (strain S19), this protein is ATP-dependent protease ATPase subunit HslU.